A 797-amino-acid polypeptide reads, in one-letter code: Inactive deaminase YBR284W (797 aa).

A helical transmembrane segment spans residues 627-647 (LVYLFYLSQIPMVVAPLNSIV).

The protein belongs to the metallo-dependent hydrolases superfamily. Adenosine and AMP deaminases family.

It localises to the membrane. This Saccharomyces cerevisiae (strain ATCC 204508 / S288c) (Baker's yeast) protein is Inactive deaminase YBR284W.